The chain runs to 261 residues: Ribosome biogenesis protein NSA2 (261 aa).

Composition is skewed to basic and acidic residues over residues 1–22 (MPQN…DHDE) and 49–74 (LYAE…RNVK). Residues 1-84 (MPQNEYIERW…TSEPAEPSTE (84 aa)) are disordered. The Nuclear localization signal motif lies at 15–22 (GKRFDHDE).

It belongs to the eukaryotic ribosomal protein eS8 family. Ribosome biogenesis protein NSA2 subfamily. Component of the pre-66S ribosomal particle. Interacts with NOP7 and RRP1. Interacts with RSA4 (via WD repeats).

It localises to the nucleus. It is found in the nucleolus. Involved in the biogenesis of the 60S ribosomal subunit. May play a part in the quality control of pre-60S particles. In Phaeosphaeria nodorum (strain SN15 / ATCC MYA-4574 / FGSC 10173) (Glume blotch fungus), this protein is Ribosome biogenesis protein NSA2 (NSA2).